The chain runs to 156 residues: 6,7-dimethyl-8-ribityllumazine synthase (156 aa).

5-amino-6-(D-ribitylamino)uracil-binding positions include F22, A57 to E59, and T81 to I83. G86 to T87 contributes to the (2S)-2-hydroxy-3-oxobutyl phosphate binding site. The active-site Proton donor is H89. Residue F114 participates in 5-amino-6-(D-ribitylamino)uracil binding. Position 128 (R128) interacts with (2S)-2-hydroxy-3-oxobutyl phosphate.

Belongs to the DMRL synthase family. As to quaternary structure, forms an icosahedral capsid composed of 60 subunits, arranged as a dodecamer of pentamers.

The enzyme catalyses (2S)-2-hydroxy-3-oxobutyl phosphate + 5-amino-6-(D-ribitylamino)uracil = 6,7-dimethyl-8-(1-D-ribityl)lumazine + phosphate + 2 H2O + H(+). Its pathway is cofactor biosynthesis; riboflavin biosynthesis; riboflavin from 2-hydroxy-3-oxobutyl phosphate and 5-amino-6-(D-ribitylamino)uracil: step 1/2. In terms of biological role, catalyzes the formation of 6,7-dimethyl-8-ribityllumazine by condensation of 5-amino-6-(D-ribitylamino)uracil with 3,4-dihydroxy-2-butanone 4-phosphate. This is the penultimate step in the biosynthesis of riboflavin. In Edwardsiella ictaluri (strain 93-146), this protein is 6,7-dimethyl-8-ribityllumazine synthase.